Reading from the N-terminus, the 701-residue chain is Elongation factor G (701 aa).

The tr-type G domain occupies G8–T291. GTP-binding positions include A17 to T24, D89 to H93, and N143 to D146.

Belongs to the TRAFAC class translation factor GTPase superfamily. Classic translation factor GTPase family. EF-G/EF-2 subfamily.

The protein localises to the cytoplasm. Catalyzes the GTP-dependent ribosomal translocation step during translation elongation. During this step, the ribosome changes from the pre-translocational (PRE) to the post-translocational (POST) state as the newly formed A-site-bound peptidyl-tRNA and P-site-bound deacylated tRNA move to the P and E sites, respectively. Catalyzes the coordinated movement of the two tRNA molecules, the mRNA and conformational changes in the ribosome. The chain is Elongation factor G from Pseudomonas syringae pv. syringae (strain B728a).